The primary structure comprises 669 residues: CoB--CoM heterodisulfide reductase iron-sulfur subunit A 1 (669 aa).

Gly153–Glu176 is an FAD binding site. Position 200 (Sec200) is a non-standard amino acid, selenocysteine. 4 4Fe-4S ferredoxin-type domains span residues Lys239 to Gly270, Leu287 to Glu318, Ile584 to Lys613, and Arg617 to Tyr646. Cys249, Cys252, Cys255, Cys259, Cys296, Cys299, Cys302, Cys306, Cys593, Cys596, Cys599, Cys603, Cys626, Cys629, Cys632, and Cys636 together coordinate [4Fe-4S] cluster.

It belongs to the HdrA family. As to quaternary structure, the ferredoxin:CoB-CoM heterodisulfide reductase is composed of three subunits; HdrA, HdrB and HdrC. It depends on [4Fe-4S] cluster as a cofactor. The cofactor is FAD.

It participates in cofactor metabolism; coenzyme M-coenzyme B heterodisulfide reduction; coenzyme B and coenzyme M from coenzyme M-coenzyme B heterodisulfide: step 1/1. Functionally, part of a complex that catalyzes the reversible reduction of CoM-S-S-CoB to the thiol-coenzymes H-S-CoM (coenzyme M) and H-S-CoB (coenzyme B). This chain is CoB--CoM heterodisulfide reductase iron-sulfur subunit A 1 (hdrA1), found in Methanopyrus kandleri (strain AV19 / DSM 6324 / JCM 9639 / NBRC 100938).